A 559-amino-acid polypeptide reads, in one-letter code: Protein QNR-71 (559 aa).

Residues 1–22 form the signal peptide; the sequence is MSQAHRHLALLLPAEAVLCAAA. At 23 to 487 the chain is on the extracellular side; that stretch reads MRFQDVLSNG…NGGSSSGTTK (465 aa). N-linked (GlcNAc...) asparagine glycosylation is found at Asn92, Asn133, Asn145, Asn149, Asn192, Asn199, Asn248, Asn274, Asn307, and Asn311. The PKD domain maps to 239–326; the sequence is VSMSQKHDRN…IIPVPCKPVT (88 aa). Residues 329–356 are disordered; that stretch reads PSLPTPAVTTDASSNSDPSAPNEMAEDN. Positions 335-347 are enriched in polar residues; that stretch reads AVTTDASSNSDPS. Asn459 is a glycosylation site (N-linked (GlcNAc...) asparagine). The helical transmembrane segment at 488-508 threads the bilayer; it reads GVFIFLGLLAVFGAIGAFVLY. Over 509 to 559 the chain is Cytoplasmic; the sequence is KRYKQYKPIERSAGQAENQEGLSAYVSNFKAFFFPKSTERNPLLKSKPGIV.

This sequence belongs to the PMEL/NMB family. As to expression, melanocyte-specific, restricted to the pigmented layer of the retina and the epidermis.

Its subcellular location is the membrane. Could be involved in melanogenesis. This is Protein QNR-71 (QNR-71) from Coturnix japonica (Japanese quail).